The sequence spans 691 residues: Dipeptidyl peptidase 3 (691 aa).

Position 431 (His431) interacts with Zn(2+). The active site involves Glu432. Positions 436 and 492 each coordinate Zn(2+).

It belongs to the peptidase M49 family. Requires Zn(2+) as cofactor.

The protein resides in the cytoplasm. It carries out the reaction Release of an N-terminal dipeptide from a peptide comprising four or more residues, with broad specificity. Also acts on dipeptidyl 2-naphthylamides.. The chain is Dipeptidyl peptidase 3 (dpp3-1) from Dictyostelium discoideum (Social amoeba).